The sequence spans 297 residues: tRNA pseudouridine synthase A (297 aa).

Aspartate 72 acts as the Nucleophile in catalysis. Substrate is bound at residue tyrosine 144.

Belongs to the tRNA pseudouridine synthase TruA family. As to quaternary structure, homodimer.

The enzyme catalyses uridine(38/39/40) in tRNA = pseudouridine(38/39/40) in tRNA. Functionally, formation of pseudouridine at positions 38, 39 and 40 in the anticodon stem and loop of transfer RNAs. The polypeptide is tRNA pseudouridine synthase A (Mycobacterium bovis (strain ATCC BAA-935 / AF2122/97)).